The following is a 251-amino-acid chain: uncharacterized protein (251 aa).

The N-terminal stretch at 1–18 (MRILIILSIILCSLSIRA) is a signal peptide.

It belongs to the MlaA family.

This is an uncharacterized protein from Rickettsia conorii (strain ATCC VR-613 / Malish 7).